Reading from the N-terminus, the 375-residue chain is Queuine tRNA-ribosyltransferase (375 aa).

The Proton acceptor role is filled by aspartate 94. Substrate contacts are provided by residues 94 to 98, aspartate 148, glutamine 191, and glycine 218; that span reads DSGGF. Residues 249–255 form an RNA binding region; that stretch reads GVGSPDD. Aspartate 268 functions as the Nucleophile in the catalytic mechanism. Positions 273 to 277 are RNA binding; important for wobble base 34 recognition; sequence TRIAR. Cysteine 306, cysteine 308, cysteine 311, and histidine 337 together coordinate Zn(2+).

The protein belongs to the queuine tRNA-ribosyltransferase family. In terms of assembly, homodimer. Within each dimer, one monomer is responsible for RNA recognition and catalysis, while the other monomer binds to the replacement base PreQ1. It depends on Zn(2+) as a cofactor.

It catalyses the reaction 7-aminomethyl-7-carbaguanine + guanosine(34) in tRNA = 7-aminomethyl-7-carbaguanosine(34) in tRNA + guanine. It functions in the pathway tRNA modification; tRNA-queuosine biosynthesis. Its function is as follows. Catalyzes the base-exchange of a guanine (G) residue with the queuine precursor 7-aminomethyl-7-deazaguanine (PreQ1) at position 34 (anticodon wobble position) in tRNAs with GU(N) anticodons (tRNA-Asp, -Asn, -His and -Tyr). Catalysis occurs through a double-displacement mechanism. The nucleophile active site attacks the C1' of nucleotide 34 to detach the guanine base from the RNA, forming a covalent enzyme-RNA intermediate. The proton acceptor active site deprotonates the incoming PreQ1, allowing a nucleophilic attack on the C1' of the ribose to form the product. After dissociation, two additional enzymatic reactions on the tRNA convert PreQ1 to queuine (Q), resulting in the hypermodified nucleoside queuosine (7-(((4,5-cis-dihydroxy-2-cyclopenten-1-yl)amino)methyl)-7-deazaguanosine). This chain is Queuine tRNA-ribosyltransferase, found in Thermoanaerobacter sp. (strain X514).